The following is a 226-amino-acid chain: 2-C-methyl-D-erythritol 4-phosphate cytidylyltransferase (226 aa).

The protein belongs to the IspD/TarI cytidylyltransferase family. IspD subfamily.

It catalyses the reaction 2-C-methyl-D-erythritol 4-phosphate + CTP + H(+) = 4-CDP-2-C-methyl-D-erythritol + diphosphate. It participates in isoprenoid biosynthesis; isopentenyl diphosphate biosynthesis via DXP pathway; isopentenyl diphosphate from 1-deoxy-D-xylulose 5-phosphate: step 2/6. Its function is as follows. Catalyzes the formation of 4-diphosphocytidyl-2-C-methyl-D-erythritol from CTP and 2-C-methyl-D-erythritol 4-phosphate (MEP). The protein is 2-C-methyl-D-erythritol 4-phosphate cytidylyltransferase of Rhodococcus jostii (strain RHA1).